Here is a 207-residue protein sequence, read N- to C-terminus: Protein MK0488 (207 aa).

The region spanning 8–200 is the AMMECR1 domain; sequence EEGEFLVRLA…EEEPEGPVRE (193 aa).

The sequence is that of Protein MK0488 from Methanopyrus kandleri (strain AV19 / DSM 6324 / JCM 9639 / NBRC 100938).